Here is a 676-residue protein sequence, read N- to C-terminus: Periplasmic alpha-amylase (676 aa).

A signal peptide spans 1–17 (MKLAACFLTLLPGFAVA). Disulfide bonds link Cys-57–Cys-75 and Cys-121–Cys-537. Asn-314 contacts Ca(2+). The Nucleophile role is filled by Asp-460. His-464 provides a ligand contact to Ca(2+). Residue Glu-503 is the Proton donor of the active site.

The protein belongs to the glycosyl hydrolase 13 family. As to quaternary structure, monomer. Requires Ca(2+) as cofactor.

It is found in the periplasm. It carries out the reaction Endohydrolysis of (1-&gt;4)-alpha-D-glucosidic linkages in polysaccharides containing three or more (1-&gt;4)-alpha-linked D-glucose units.. Functionally, since only maltooligosaccharides up to a chain length of 6 glucose units are actively transported through the cytoplasmic membrane via the membrane-bound complex of three proteins, MalF, MalG, and MalK, longer maltooligosaccharides must first be degraded by the periplasmic alpha-amylase, the MalS protein. The sequence is that of Periplasmic alpha-amylase (malS) from Escherichia coli (strain K12).